We begin with the raw amino-acid sequence, 110 residues long: MTRMPKVQVCYALPERQTLVAVDVPAGASVRDAIAASGVLALHPDIDASALKTGIFGKLAPLDAPVADGDRVEIYRPLIVDPKLARQRRVDKTRREGSIEGRKWLPKDSR.

The disordered stretch occupies residues 90 to 110 (VDKTRREGSIEGRKWLPKDSR).

It belongs to the UPF0125 (RnfH) family.

The polypeptide is Protein RnfH (Burkholderia mallei (strain NCTC 10229)).